A 391-amino-acid polypeptide reads, in one-letter code: Small ribosomal subunit protein bS1 (391 aa).

S1 motif domains lie at 16-90 (GDKV…LSRR), 108-173 (NEII…LSRK), 194-262 (GDVI…LSIK), and 279-348 (NDVI…LSIK).

This sequence belongs to the bacterial ribosomal protein bS1 family.

Binds mRNA; thus facilitating recognition of the initiation point. It is needed to translate mRNA with a short Shine-Dalgarno (SD) purine-rich sequence. This is Small ribosomal subunit protein bS1 (rpsA) from Staphylococcus aureus (strain N315).